A 427-amino-acid chain; its full sequence is Dihydroorotase (427 aa).

His60 and His62 together coordinate Zn(2+). Substrate contacts are provided by residues 62–64 (HLR) and Asn94. Residues Asp152, His179, and His232 each contribute to the Zn(2+) site. A substrate-binding site is contributed by Asn278. Asp305 contacts Zn(2+). Asp305 is an active-site residue. Substrate contacts are provided by residues His309 and 323-324 (FG).

This sequence belongs to the metallo-dependent hydrolases superfamily. DHOase family. Class I DHOase subfamily. Requires Zn(2+) as cofactor.

The enzyme catalyses (S)-dihydroorotate + H2O = N-carbamoyl-L-aspartate + H(+). The protein operates within pyrimidine metabolism; UMP biosynthesis via de novo pathway; (S)-dihydroorotate from bicarbonate: step 3/3. Its function is as follows. Catalyzes the reversible cyclization of carbamoyl aspartate to dihydroorotate. This Geobacillus sp. (strain WCH70) protein is Dihydroorotase.